We begin with the raw amino-acid sequence, 333 residues long: Methionine import ATP-binding protein MetN 1 (333 aa).

Residues 2 to 241 (ITFEGVEKVY…PETETAKSFV (240 aa)) form the ABC transporter domain. 38-45 (GFSGAGKS) contacts ATP.

This sequence belongs to the ABC transporter superfamily. Methionine importer (TC 3.A.1.24) family. The complex is composed of two ATP-binding proteins (MetN), two transmembrane proteins (MetI) and a solute-binding protein (MetQ).

It localises to the cell membrane. It catalyses the reaction L-methionine(out) + ATP + H2O = L-methionine(in) + ADP + phosphate + H(+). It carries out the reaction D-methionine(out) + ATP + H2O = D-methionine(in) + ADP + phosphate + H(+). Functionally, part of the ABC transporter complex MetNIQ involved in methionine import. Responsible for energy coupling to the transport system. In Bacillus licheniformis (strain ATCC 14580 / DSM 13 / JCM 2505 / CCUG 7422 / NBRC 12200 / NCIMB 9375 / NCTC 10341 / NRRL NRS-1264 / Gibson 46), this protein is Methionine import ATP-binding protein MetN 1.